The following is a 77-amino-acid chain: DNA-directed RNA polymerase subunit omega (77 aa).

This sequence belongs to the RNA polymerase subunit omega family. As to quaternary structure, in cyanobacteria the RNAP catalytic core is composed of 2 alpha, 1 beta, 1 beta', 1 gamma and 1 omega subunit. When a sigma factor is associated with the core the holoenzyme is formed, which can initiate transcription.

The catalysed reaction is RNA(n) + a ribonucleoside 5'-triphosphate = RNA(n+1) + diphosphate. In terms of biological role, promotes RNA polymerase assembly. Latches the N- and C-terminal regions of the beta' subunit thereby facilitating its interaction with the beta and alpha subunits. This is DNA-directed RNA polymerase subunit omega from Thermosynechococcus vestitus (strain NIES-2133 / IAM M-273 / BP-1).